Consider the following 935-residue polypeptide: Protein translocase subunit SecA (935 aa).

Residues glutamine 86, 104–108 (GEGKT), and aspartate 494 each bind ATP. The interval 879-935 (EQAATARAQQHSSAAVAAPEQGATQRGAFGQRVSAADDAAPANRAERRAQKKPTKRH) is disordered.

The protein belongs to the SecA family. As to quaternary structure, monomer and homodimer. Part of the essential Sec protein translocation apparatus which comprises SecA, SecYEG and auxiliary proteins SecDF. Other proteins may also be involved.

It localises to the cell membrane. Its subcellular location is the cytoplasm. It catalyses the reaction ATP + H2O + cellular proteinSide 1 = ADP + phosphate + cellular proteinSide 2.. Functionally, part of the Sec protein translocase complex. Interacts with the SecYEG preprotein conducting channel. Has a central role in coupling the hydrolysis of ATP to the transfer of proteins into and across the cell membrane, serving as an ATP-driven molecular motor driving the stepwise translocation of polypeptide chains across the membrane. The protein is Protein translocase subunit SecA of Leifsonia xyli subsp. xyli (strain CTCB07).